A 3184-amino-acid polypeptide reads, in one-letter code: Probable serine/threonine-protein kinase pats1 (3184 aa).

Over residues 369–378 (DPPPPPPSNS) the composition is skewed to pro residues. 2 disordered regions span residues 369-516 (DPPP…QIPP) and 913-1013 (SITR…TSIL). The segment covering 379–415 (SPPISKSTSNNNLNVSNYHNNNNNNNNSNSNLSNSGN) has biased composition (low complexity). Residues 421–450 (DFQSQNLVKSYNRENSGNSLNSMLHQTSLP) are compositionally biased toward polar residues. Low complexity predominate over residues 451 to 512 (NNNNSNVVNN…NNNNSNNNNS (62 aa)). Positions 842 to 1348 (CFPDHSLLQE…FQDTMWNEYF (507 aa)) constitute a Myotubularin phosphatase domain. Polar residues predominate over residues 913–934 (SITRATSPEDQNNGSSNYLLTP). Positions 935–993 (NSPNSSSSNLANNNNSNNNNINNNNNNNNNNNNNNNNNSNNNNNNNNNNNNNNNNNNNN) are enriched in low complexity. The span at 1000–1013 (SRSTTIDNGQTSIL) shows a compositional bias: polar residues. 13 LRR repeats span residues 1391-1412 (FLET…STLY), 1416-1438 (GLRE…SSLV), 1439-1460 (KLEK…TVVL), 1467-1488 (SLTE…FSMF), 1491-1512 (SLKK…LGML), 1514-1535 (NLIE…GVGI), 1541-1563 (KLCI…GDLK), 1564-1585 (SLEK…FRQL), 1587-1608 (NLEE…VCFL), 1610-1631 (NLKK…ISQL), 1633-1654 (KLMI…IGQL), 1656-1678 (QLVS…MGLL), and 1680-1701 (NLVE…IVSL). The Roc domain maps to 1716–1910 (GQEQCYKMKL…EKLEALVQSQ (195 aa)). The tract at residues 1716–1910 (GQEQCYKMKL…EKLEALVQSQ (195 aa)) is small GTPase-like. Residues 1729 to 1736 (GQENVGKT), 1797 to 1801 (DFAGQ), and 1854 to 1857 (THLD) contribute to the GTP site. A COR domain is found at 1918-2127 (PRSYMLLENL…KCYWKNGMIL (210 aa)). The region spanning 2247-2519 (LMIEELIGEG…RLIKIAEAMF (273 aa)) is the Protein kinase domain. ATP-binding positions include 2253-2261 (IGEGGAALV) and Lys-2274. The active-site Proton acceptor is Asp-2379. Disordered regions lie at residues 2528-2609 (YQQQ…TISH) and 2652-2671 (NSIN…NSLL). Over residues 2529–2555 (QQQQQQQQQQQQSSPSKSSSTSPIIKS) the composition is skewed to low complexity. Positions 2556 to 2576 (LNLSTVSELGESSNQTPKQNI) are enriched in polar residues. 5 WD repeats span residues 2745 to 2785 (PNQG…KYIQ), 2790 to 2829 (ANKD…KIKS), 2909 to 2947 (AHER…HTIE), 2949 to 2986 (AHSS…LVSE), and 2990 to 3040 (KHKD…NSRS). Low complexity predominate over residues 3055–3126 (GSSNSITNSN…NYYYSNNVNS (72 aa)). The tract at residues 3055–3164 (GSSNSITNSN…TPPGSKGLMQ (110 aa)) is disordered. The span at 3141–3157 (HEQTSPNSATPLSSTPP) shows a compositional bias: polar residues.

The protein belongs to the protein kinase superfamily. TKL Ser/Thr protein kinase family. ROCO subfamily.

It carries out the reaction L-seryl-[protein] + ATP = O-phospho-L-seryl-[protein] + ADP + H(+). The enzyme catalyses L-threonyl-[protein] + ATP = O-phospho-L-threonyl-[protein] + ADP + H(+). Its function is as follows. May act as a serine/threonine-protein kinase and guanine-nucleotide releasing factor. Essential regulator of cytokinesis involved in the binding to actomyosin cytoskeleton. In Dictyostelium discoideum (Social amoeba), this protein is Probable serine/threonine-protein kinase pats1 (pats1).